We begin with the raw amino-acid sequence, 434 residues long: Probable zinc metalloprotease PTRG_04772 (434 aa).

A glycan (N-linked (GlcNAc...) asparagine) is linked at asparagine 88. Zn(2+) contacts are provided by histidine 111, aspartate 131, and glutamate 164. N-linked (GlcNAc...) asparagine glycosylation occurs at asparagine 179. Aspartate 191 contacts Zn(2+). 6 N-linked (GlcNAc...) asparagine glycosylation sites follow: asparagine 220, asparagine 299, asparagine 347, asparagine 353, asparagine 390, and asparagine 395. In terms of domain architecture, Fibronectin type-III spans 340 to 433 (SPTNVGINTT…LPFPFGCARN (94 aa)).

The protein belongs to the peptidase M28 family. M28B subfamily. Requires Zn(2+) as cofactor.

It is found in the secreted. The sequence is that of Probable zinc metalloprotease PTRG_04772 from Pyrenophora tritici-repentis (strain Pt-1C-BFP) (Wheat tan spot fungus).